The chain runs to 423 residues: uncharacterized protein (423 aa).

This sequence belongs to the IIV-6 198R family.

This is an uncharacterized protein from Aedes vexans (Inland floodwater mosquito).